The chain runs to 141 residues: ATP synthase epsilon chain (141 aa).

It belongs to the ATPase epsilon chain family. As to quaternary structure, F-type ATPases have 2 components, CF(1) - the catalytic core - and CF(0) - the membrane proton channel. CF(1) has five subunits: alpha(3), beta(3), gamma(1), delta(1), epsilon(1). CF(0) has three main subunits: a, b and c.

The protein resides in the cell inner membrane. Produces ATP from ADP in the presence of a proton gradient across the membrane. This is ATP synthase epsilon chain from Aromatoleum aromaticum (strain DSM 19018 / LMG 30748 / EbN1) (Azoarcus sp. (strain EbN1)).